Here is a 181-residue protein sequence, read N- to C-terminus: MQGQGALKESHIHLPTEQPEASLVLQGQLAESSALGPKGALRPQAQSPDVPVSWWQGSGKRLSHRLPHICSQPPLGPFLPLTWPSCGFFGLGGAASASLGLEVLQDSVSTWARGPCCPVHPQSLTVVCMCACMCVCVHVCACVYVCMCVLVCMCACACMRAHRYFLMDCAGICSPHGPGTQ.

The chain crosses the membrane as a helical span at residues 133–153 (MCVCVHVCACVYVCMCVLVCM).

Its subcellular location is the membrane. This is an uncharacterized protein from Homo sapiens (Human).